The chain runs to 857 residues: Phosphoenolpyruvate carboxylase (857 aa).

Active-site residues include His144 and Lys530.

Belongs to the PEPCase type 1 family. In terms of assembly, homotetramer. It depends on Mg(2+) as a cofactor. The N-terminus is blocked.

The enzyme catalyses oxaloacetate + phosphate = phosphoenolpyruvate + hydrogencarbonate. Its function is as follows. Forms oxaloacetate, a four-carbon dicarboxylic acid source for the tricarboxylic acid cycle. The chain is Phosphoenolpyruvate carboxylase (ppc) from Thermus sp. (strain 71).